A 342-amino-acid polypeptide reads, in one-letter code: MNNAGHGPTRRLRGLGVLAGVALLAALWLLWLLGSAPRGTPAPQPTITILVWHWPFTDQPPELPSDTCTRYGIARCHLSANRSLLASADAVVFHHRELQTRRSHLPLAQRPRGQPWVWASMESPSHTHGLSHLRGIFNWVLSYRRDSDIFVPYGRLEPHWGPSPPLPAKSRVAAWVVSNFQERQLRARLYRQLAPHLRVDVFGRANGRPLCASCLVPTVAQYRFYLSFENSQHRDYITEKFWRNALVAGTVPVVLGPPRATYEAFVPADAFVHVDDFGSARELAAFLTGMNESRYQRFFAWRDRLRVRLFTDWRERFCAICDRYPHLPRSQVYEDLEGWFQA.

Over Met-1 to Gly-14 the chain is Cytoplasmic. Residues Leu-15–Ala-36 form a helical; Signal-anchor for type II membrane protein membrane-spanning segment. The Lumenal portion of the chain corresponds to Pro-37–Ala-342. Cys-68 and Cys-76 form a disulfide bridge. Asn-81 carries N-linked (GlcNAc...) asparagine glycosylation. An intrachain disulfide couples Cys-211 to Cys-214. Asn-291 is a glycosylation site (N-linked (GlcNAc...) asparagine). A disulfide bridge links Cys-318 with Cys-321.

The protein belongs to the glycosyltransferase 10 family. In terms of processing, N-glycosylated. In terms of tissue distribution, leukocytic/myeloid lineage cells.

Its subcellular location is the golgi apparatus. The protein resides in the golgi stack membrane. The enzyme catalyses an N-acetyl-alpha-neuraminyl-(2-&gt;3)-beta-D-galactosyl-(1-&gt;4)-N-acetyl-beta-D-glucosaminyl derivative + GDP-beta-L-fucose = an alpha-Neu5Ac-(2-&gt;3)-beta-D-Gal-(1-&gt;4)-[alpha-L-Fuc-(1-&gt;3)]-beta-D-GlcNAc derivative + GDP + H(+). The catalysed reaction is a neolactoside IV(3)-alpha-NeuAc-nLc4Cer + GDP-beta-L-fucose = a neolactoside IV(3)-alpha-NeuNAc,III(3)-alpha-Fuc-nLc4Cer + GDP + H(+). It carries out the reaction a neolactoside VI(3)-alpha-NeuNAc-nLc6Cer + GDP-beta-L-fucose = a neolactoside VI(3)-alpha-NeuAc,V(3)-alphaFuc-nLc6Cer + GDP + H(+). It catalyses the reaction an alpha-Neu5Ac-(2-&gt;3)-beta-D-Gal-(1-&gt;4)-beta-D-GlcNAc-(1-&gt;3)-beta-D-Gal-(1-&gt;4)-[alpha-L-Fuc-(1-&gt;3)]-beta-D-GlcNAc derivative + GDP-beta-L-fucose = an alpha-Neu5Ac-(2-&gt;3)-beta-D-Gal-(1-&gt;4)-[alpha-L-Fuc-(1-&gt;3)]-beta-D-GlcNAc-(1-&gt;3)-beta-D-Gal-(1-&gt;4)-[alpha-L-Fuc-(1-&gt;3)]-beta-D-GlcNAc derivative + GDP + H(+). The enzyme catalyses an alpha-Neu5Ac-(2-&gt;3)-beta-D-Gal-(1-&gt;4)-beta-D-GlcNAc6S derivative + GDP-beta-L-fucose = an alpha-Neu5Ac-(2-&gt;3)-beta-D-Gal-(1-&gt;4)-[alpha-L-Fuc-(1-&gt;3)]-beta-D-GlcNAc6S derivative + GDP + H(+). The catalysed reaction is alpha-Neu5Ac-(2-&gt;3)-beta-D-Gal-(1-&gt;4)-beta-D-GlcNAc-(1-&gt;3)-beta-D-Gal-(1-&gt;4)-D-Glc + GDP-beta-L-fucose = alpha-Neu5Ac-(2-&gt;3)-beta-D-Gal-(1-&gt;4)-[alpha-L-Fuc-(1-&gt;3)]-beta-D-GlcNAc-(1-&gt;3)-beta-D-Gal-(1-&gt;4)-D-Glc + GDP + H(+). It carries out the reaction alpha-Neu5Ac-(2-&gt;3)-beta-D-Gal-(1-&gt;4)-beta-D-GlcNAc-(1-&gt;3)-beta-D-Gal-(1-&gt;4)-[alpha-L-Fuc-(1-&gt;3)]-beta-D-GlcNAc-(1-&gt;3)-beta-D-Gal-(1-&gt;4)-beta-D-GlcNAc + GDP-beta-L-fucose = alpha-Neu5Ac-(2-&gt;3)-beta-D-Gal-(1-&gt;4)-[alpha-L-Fuc-(1-&gt;3)]-beta-D-GlcNAc-(1-&gt;3)-beta-D-Gal-(1-&gt;4)-[alpha-L-Fuc-(1-&gt;3)]-beta-D-GlcNAc-(1-&gt;3)-beta-D-Gal-(1-&gt;4)-beta-D-GlcNAc + GDP + H(+). It catalyses the reaction alpha-Neu5Ac-(2-&gt;3)-beta-D-Gal-(1-&gt;4)-beta-D-GlcNAc-(1-&gt;3)-beta-D-Gal-(1-&gt;4)-beta-D-GlcNAc-(1-&gt;3)-beta-D-Gal-(1-&gt;4)-beta-D-GlcNAc + GDP-beta-L-fucose = alpha-Neu5Ac-(2-&gt;3)-beta-D-Gal-(1-&gt;4)-[alpha-L-Fuc-(1-&gt;3)]-beta-D-GlcNAc-(1-&gt;3)-beta-D-Gal-(1-&gt;4)-beta-D-GlcNAc-(1-&gt;3)-beta-D-Gal-(1-&gt;4)-beta-D-GlcNAc + GDP + H(+). Its pathway is protein modification; protein glycosylation. Its activity is regulated as follows. Inhibited by NaCl. Inhibited by GDP in a concentration dependent manner, with an IC(50) value of 93 uM. Also inhibited by GMP and GTP. Inhibited by N-ethylmaleimide. Activated by poly(ethylene glycol) by enhancing the thermal stability of FUT7. Activated by Mn2+, Ca2+, and Mg2+. Both panosialin A and B inhibit activity with IC(50) values of 4.8 and 5.3 ug/ml, respectively. Inhibited by gallic acid (GA) and (-)-epigallocatechin gallate (EGCG) in a time-dependent and irreversible manner with IC(50) values of 60 and 700 nM, respectively. In terms of biological role, catalyzes the transfer of L-fucose, from a guanosine diphosphate-beta-L-fucose, to the N-acetyl glucosamine (GlcNAc) of a distal alpha2,3 sialylated lactosamine unit of a glycoprotein or a glycolipid-linked sialopolylactosamines chain through an alpha-1,3 glycosidic linkage and participates in the final fucosylation step in the biosynthesis of the sialyl Lewis X (sLe(x)), a carbohydrate involved in cell and matrix adhesion during leukocyte trafficking and fertilization. In vitro, also synthesizes sialyl-dimeric-Lex structures, from VIM-2 structures and both di-fucosylated and trifucosylated structures from mono-fucosylated precursors. However does not catalyze alpha 1-3 fucosylation when an internal alpha 1-3 fucosylation is present in polylactosamine chain and the fucosylation rate of the internal GlcNAc residues is reduced once fucose has been added to the distal GlcNAc. Also catalyzes the transfer of a fucose from GDP-beta-fucose to the 6-sulfated a(2,3)sialylated substrate to produce 6-sulfo sLex mediating significant L-selectin-dependent cell adhesion. Through sialyl-Lewis(x) biosynthesis, can control SELE- and SELP-mediated cell adhesion with leukocytes and allows leukocytes tethering and rolling along the endothelial tissue thereby enabling the leukocytes to accumulate at a site of inflammation. May enhance embryo implantation through sialyl Lewis X (sLeX)-mediated adhesion of embryo cells to endometrium. May affect insulin signaling by up-regulating the phosphorylation and expression of some signaling molecules involved in the insulin-signaling pathway through SLe(x) which is present on the glycans of the INSRR alpha subunit. The polypeptide is Alpha-(1,3)-fucosyltransferase 7 (Homo sapiens (Human)).